The sequence spans 562 residues: Undecaprenyl phosphate-alpha-4-amino-4-deoxy-L-arabinose arabinosyl transferase (562 aa).

Helical transmembrane passes span 14-34 (IKFSITIIAFILLYYLIPLNY), 91-111 (FSVRFGSFLFTLFSANLIYLF), 120-140 (ILSLNSVIIFLSILLVYIIGT), 142-162 (SVLDSIISFWINLSMISFWLA), 186-206 (FITKGFISLLIPFISIFIWLF), 215-235 (TIIHCFFSLLISILIIFPWIY), 267-287 (PFWYYFPIFIIGCLPWSGFLF), 302-322 (IEFYLLLWIIVQFCFFSISKG), 324-344 (LPTYILPCFFPLSILIAKNIE), 354-374 (LLKINSIINTIVGSTLLIFII), 395-415 (LILCIFSIFVWIFLNLCIIFN), and 425-445 (LSIIGIAFLFGLYVPEKIIYA).

This sequence belongs to the glycosyltransferase 83 family.

Its subcellular location is the cell inner membrane. The catalysed reaction is 4-amino-4-deoxy-alpha-L-arabinopyranosyl di-trans,octa-cis-undecaprenyl phosphate + lipid IVA = lipid IIA + di-trans,octa-cis-undecaprenyl phosphate.. Its pathway is lipopolysaccharide metabolism; 4-amino-4-deoxy-beta-L-arabinose-lipid A biosynthesis. Functionally, catalyzes the transfer of the L-Ara4N moiety of the glycolipid undecaprenyl phosphate-alpha-L-Ara4N to lipid A. The modified arabinose is attached to lipid A and is required for resistance to polymyxin and cationic antimicrobial peptides. The protein is Undecaprenyl phosphate-alpha-4-amino-4-deoxy-L-arabinose arabinosyl transferase of Wigglesworthia glossinidia brevipalpis.